Here is a 1091-residue protein sequence, read N- to C-terminus: Exonuclease/helicase subunit RexB (1091 aa).

The protein belongs to the helicase family. AddB/RexB type 2 subfamily. Heterodimer of RexA (AddA) and RexB. Requires Mg(2+) as cofactor.

Involved in DNA double-strand break repair. Is not involved in recombination during natural competence or in plasmid establishment. In terms of biological role, the heterodimer acts as both an ATP-dependent DNA helicase and an ATP-dependent, dual-direction single-stranded exonuclease. Recognizes the chi site generating a DNA molecule suitable for the initiation of homologous recombination. This subunit has 5' -&gt; 3' nuclease activity but not helicase activity. This is Exonuclease/helicase subunit RexB from Streptococcus pneumoniae serotype 4 (strain ATCC BAA-334 / TIGR4).